The primary structure comprises 328 residues: Methionine import ATP-binding protein MetN 1 (328 aa).

Residues 2–241 (ISIERLSKTY…PLSRLGRSLL (240 aa)) form the ABC transporter domain. 38–45 (GRSGAGKS) is an ATP binding site.

It belongs to the ABC transporter superfamily. Methionine importer (TC 3.A.1.24) family. In terms of assembly, the complex is composed of two ATP-binding proteins (MetN), two transmembrane proteins (MetI) and a solute-binding protein (MetQ).

The protein resides in the cell inner membrane. It carries out the reaction L-methionine(out) + ATP + H2O = L-methionine(in) + ADP + phosphate + H(+). The enzyme catalyses D-methionine(out) + ATP + H2O = D-methionine(in) + ADP + phosphate + H(+). In terms of biological role, part of the ABC transporter complex MetNIQ involved in methionine import. Responsible for energy coupling to the transport system. The chain is Methionine import ATP-binding protein MetN 1 from Yersinia pestis bv. Antiqua (strain Nepal516).